Consider the following 602-residue polypeptide: Proteasome-associated ATPase (602 aa).

The segment covering 1 to 17 (MSGPRSGSGSDGSTGRP) has biased composition (low complexity). Residues 1–31 (MSGPRSGSGSDGSTGRPGDAESRRSAYEKET) are disordered. The segment covering 18 to 31 (GDAESRRSAYEKET) has biased composition (basic and acidic residues). A coiled-coil region spans residues 19–106 (DAESRRSAYE…LKEEVDRLAQ (88 aa)). Position 289-294 (289-294 (GCGKTL)) interacts with ATP. Residues 601–602 (YL) form a docks into pockets in the proteasome alpha-ring region.

Belongs to the AAA ATPase family. Homohexamer. Assembles into a hexameric ring structure that caps the 20S proteasome core. Strongly interacts with the prokaryotic ubiquitin-like protein Pup through a hydrophobic interface; the interacting region of ARC lies in its N-terminal coiled-coil domain. There is one Pup binding site per ARC hexamer ring. Upon ATP-binding, the C-terminus of ARC interacts with the alpha-rings of the proteasome core, possibly by binding to the intersubunit pockets.

It functions in the pathway protein degradation; proteasomal Pup-dependent pathway. Functionally, ATPase which is responsible for recognizing, binding, unfolding and translocation of pupylated proteins into the bacterial 20S proteasome core particle. May be essential for opening the gate of the 20S proteasome via an interaction with its C-terminus, thereby allowing substrate entry and access to the site of proteolysis. Thus, the C-termini of the proteasomal ATPase may function like a 'key in a lock' to induce gate opening and therefore regulate proteolysis. This chain is Proteasome-associated ATPase, found in Frankia casuarinae (strain DSM 45818 / CECT 9043 / HFP020203 / CcI3).